Here is a 401-residue protein sequence, read N- to C-terminus: 2-amino-3-carboxymuconate-6-semialdehyde decarboxylase (401 aa).

Residues H18 and H20 each coordinate Zn(2+). R59 contacts substrate. The Zn(2+) site is built by H234 and D352.

The protein belongs to the metallo-dependent hydrolases superfamily. ACMSD family. As to quaternary structure, monomer.

The catalysed reaction is 2-amino-3-carboxymuconate 6-semialdehyde + H(+) = 2-aminomuconate 6-semialdehyde + CO2. Its pathway is secondary metabolite metabolism; quinolate metabolism. Its function is as follows. Converts alpha-amino-beta-carboxymuconate-epsilon-semialdehyde (ACMS) to alpha-aminomuconate semialdehyde (AMS). The protein is 2-amino-3-carboxymuconate-6-semialdehyde decarboxylase of Caenorhabditis elegans.